The chain runs to 164 residues: Phosphopantetheine adenylyltransferase (164 aa).

S9 contacts substrate. Residues 9 to 10 (SF) and H17 each bind ATP. Residues K41, L73, and K87 each contribute to the substrate site. ATP contacts are provided by residues 88 to 90 (GLR), E98, and 123 to 129 (HSFLSSS).

This sequence belongs to the bacterial CoaD family. In terms of assembly, homohexamer. The cofactor is Mg(2+).

Its subcellular location is the cytoplasm. The enzyme catalyses (R)-4'-phosphopantetheine + ATP + H(+) = 3'-dephospho-CoA + diphosphate. It participates in cofactor biosynthesis; coenzyme A biosynthesis; CoA from (R)-pantothenate: step 4/5. Reversibly transfers an adenylyl group from ATP to 4'-phosphopantetheine, yielding dephospho-CoA (dPCoA) and pyrophosphate. The polypeptide is Phosphopantetheine adenylyltransferase (Rubrobacter xylanophilus (strain DSM 9941 / JCM 11954 / NBRC 16129 / PRD-1)).